We begin with the raw amino-acid sequence, 509 residues long: 2,3-bisphosphoglycerate-independent phosphoglycerate mutase (509 aa).

Mn(2+)-binding residues include Asp12 and Ser62. Catalysis depends on Ser62, which acts as the Phosphoserine intermediate. Substrate-binding positions include His123, 153–154 (RD), Arg185, Arg191, 260–263 (RPDR), and Lys333. Mn(2+) is bound by residues Asp400, His404, Asp441, His442, and His460.

It belongs to the BPG-independent phosphoglycerate mutase family. As to quaternary structure, monomer. Mn(2+) serves as cofactor.

It carries out the reaction (2R)-2-phosphoglycerate = (2R)-3-phosphoglycerate. Its pathway is carbohydrate degradation; glycolysis; pyruvate from D-glyceraldehyde 3-phosphate: step 3/5. Its function is as follows. Catalyzes the interconversion of 2-phosphoglycerate and 3-phosphoglycerate. The chain is 2,3-bisphosphoglycerate-independent phosphoglycerate mutase from Clostridium botulinum (strain ATCC 19397 / Type A).